Reading from the N-terminus, the 551-residue chain is Probable glucomannan 4-beta-mannosyltransferase 3 (551 aa).

A helical membrane pass occupies residues 60–80; the sequence is ACLALSAMLLADAVLMAAACF. Residue aspartate 154 is part of the active site. The substrate site is built by aspartate 213 and aspartate 215. Aspartate 307 is a catalytic residue. 4 helical membrane-spanning segments follow: residues 386 to 406, 409 to 429, 504 to 524, and 525 to 545; these read VVAHVVPFMLYCVVIPFSVLI, VTVPVWGVVYVPTTITLLHAI, ILFSIFLFFCATYNLAYGGDY, and YFVYIYLQAIAFLVVGIGFCG.

Belongs to the glycosyltransferase 2 family. Plant cellulose synthase-like A subfamily.

The protein localises to the golgi apparatus membrane. The catalysed reaction is GDP-mannose + (glucomannan)n = GDP + (glucomannan)n+1.. In terms of biological role, probable mannan synthase which consists of a 4-beta-mannosyltransferase activity on mannan using GDP-mannose. The beta-1,4-mannan product is the backbone for galactomannan synthesis by galactomannan galactosyltransferase. Galactomannan is a noncellulosic polysaccharides of plant cell wall. This Oryza sativa subsp. japonica (Rice) protein is Probable glucomannan 4-beta-mannosyltransferase 3.